A 259-amino-acid polypeptide reads, in one-letter code: Probable UMP-CMP kinase 2 (259 aa).

Residue 63–68 coordinates ATP; that stretch reads GSGKGT. The NMP stretch occupies residues 83–112; the sequence is SAGDLLRREIAMHTENGAMILNLIKDGKIV. Residues R89, 110-112, and 137-140 contribute to the a ribonucleoside 5'-phosphate site; these read KIV and GFPR. CMP is bound at residue N144. Residues 175 to 183 are LID; the sequence is NRNQGRIDD. R176 lines the ATP pocket. Residues R180 and R191 each contribute to the a ribonucleoside 5'-phosphate site. G219 contributes to the ATP binding site.

This sequence belongs to the adenylate kinase family. UMP-CMP kinase subfamily. As to quaternary structure, monomer. Requires Mg(2+) as cofactor.

Its subcellular location is the cytoplasm. The protein localises to the nucleus. The enzyme catalyses CMP + ATP = CDP + ADP. The catalysed reaction is dCMP + ATP = dCDP + ADP. It catalyses the reaction UMP + ATP = UDP + ADP. In terms of biological role, catalyzes the phosphorylation of pyrimidine nucleoside monophosphates at the expense of ATP. Plays an important role in de novo pyrimidine nucleotide biosynthesis. Has preference for UMP and CMP as phosphate acceptors. In Arabidopsis thaliana (Mouse-ear cress), this protein is Probable UMP-CMP kinase 2 (UMK2).